We begin with the raw amino-acid sequence, 322 residues long: Methionyl-tRNA formyltransferase (322 aa).

113 to 116 lines the (6S)-5,6,7,8-tetrahydrofolate pocket; the sequence is SLLP.

The protein belongs to the Fmt family.

The catalysed reaction is L-methionyl-tRNA(fMet) + (6R)-10-formyltetrahydrofolate = N-formyl-L-methionyl-tRNA(fMet) + (6S)-5,6,7,8-tetrahydrofolate + H(+). Attaches a formyl group to the free amino group of methionyl-tRNA(fMet). The formyl group appears to play a dual role in the initiator identity of N-formylmethionyl-tRNA by promoting its recognition by IF2 and preventing the misappropriation of this tRNA by the elongation apparatus. The protein is Methionyl-tRNA formyltransferase of Blochmanniella pennsylvanica (strain BPEN).